Consider the following 287-residue polypeptide: PPP2R1A-PPP2R2A-interacting phosphatase regulator 1 (287 aa).

The disordered stretch occupies residues 1–44 (MAQEKMELDLELPPGTGGSPAEGGGSGGGGGLRRSNSAPLIHGL). A compositionally biased stretch (gly residues) spans 15–32 (GTGGSPAEGGGSGGGGGL). Ser35 carries the phosphoserine modification. Residue Ser37 is modified to Phosphoserine; by CHEK1. Residue Ser45 is modified to Phosphoserine. Residue Thr47 is modified to Phosphothreonine. Phosphoserine is present on residues Ser48, Ser62, and Ser76. Lys89 is covalently cross-linked (Glycyl lysine isopeptide (Lys-Gly) (interchain with G-Cter in SUMO1)). Phosphoserine is present on residues Ser143 and Ser147. Thr149 carries the phosphothreonine modification. Disordered regions lie at residues 167–189 (SNGL…RSQS) and 236–287 (GVCV…LSSK). 2 stretches are compositionally biased toward low complexity: residues 178 to 189 (PTTRFTTRRSQS) and 246 to 257 (GNSSSAGSSCNS). 2 positions are modified to phosphoserine: Ser187 and Ser189. The span at 259 to 270 (AKVSTTTDSPVS) shows a compositional bias: polar residues. Ser267, Ser270, and Ser276 each carry phosphoserine.

The protein belongs to the FAM122 family. In terms of assembly, interacts with PPP2CA and PPP2R1A. Interacts (via its N-terminus) with PPP2R2A; the interaction is direct and this interaction inhibits PP2A activity. The CHEK1-mediated Ser-37 phosphorylated form interacts with 14-3-3 proteins. CHEK1-mediated phosphorylation at Ser-37 negatively regulates its ability to inhibit serine/threonine-protein phosphatase 2A (PP2A) activity. Phosphorylation leads to its release from the PP2A complex and its sequestration by 14-3-3 proteins in the cytoplasm resulting in its inability to translocate to the nucleus, where it otherwise inhibits PP2A.

It is found in the nucleus. It localises to the cytoplasm. In terms of biological role, acts as an inhibitor of serine/threonine-protein phosphatase 2A (PP2A) activity. Inhibits PP2A activity by blocking the substrate binding site on PPP2R2A and the active site of PPP2CA. Potentiates ubiquitin-mediated proteasomal degradation of serine/threonine-protein phosphatase 2A catalytic subunit alpha (PPP2CA). Inhibits PP2A-mediated dephosphorylation of WEE1, promoting ubiquitin-mediated proteolysis of WEE1, thereby releasing G2/M checkpoint. In Homo sapiens (Human), this protein is PPP2R1A-PPP2R2A-interacting phosphatase regulator 1.